Here is a 320-residue protein sequence, read N- to C-terminus: Variant surface glycoprotein ILTAT 1.2 (320 aa).

Residues Asn-146, Asn-282, and Asn-295 are each glycosylated (N-linked (GlcNAc...) asparagine). Residues 297–320 (TKATENGVPVAQTQTGGSETTTEK) form a disordered region. Low complexity predominate over residues 308 to 320 (QTQTGGSETTTEK).

The protein localises to the cell membrane. Functionally, VSG forms a coat on the surface of the parasite. The trypanosome evades the immune response of the host by expressing a series of antigenically distinct VSGs from an estimated 1000 VSG genes. The protein is Variant surface glycoprotein ILTAT 1.2 of Trypanosoma brucei brucei.